Consider the following 422-residue polypeptide: MANGTRQKDLRERAERVIPGGMYGHESTRLLPPEFPQFFRRALGARIWDADEQPYIDYMCAYGPNLLGYRQSEIEAAADAQRLLGDTMTGPSEIMVNLAEAFVGMVRHADWAMFCKNGSDATSTAMVLARAHTGRKTILCAKGAYHGASPWNTPHTAGILASDRVHVAYYTYNDAQSLSDAFKAHDGDIAAVFATPFRHEVFEDQALAQLEFARTARKCCDETGALLVVDDVRAGFRVARDCSWTHLGIEPDLSCWGKCFANGYPISALLGSNKARDAARDIFVTGSFWFSAVPMAAAIETLRIIRETPYLETLIASGAALRAGLEAQSQRHGLELKQTGPAQMPQIFFADDPDFRIGYAWAAACLKGGVYVHPYHNMFLSAAHTVDDVTETLEATDRAFSAVLRDFASLQPHPILMQLAGA.

N6-(pyridoxal phosphate)lysine is present on lysine 258.

Belongs to the class-III pyridoxal-phosphate-dependent aminotransferase family. The cofactor is pyridoxal 5'-phosphate.

It is found in the cytoplasm. The catalysed reaction is (2S,3S,5R,10R,12S,14S,15R,16R)-2-amino-12,16-dimethylicosane-3,5,10,14,15-pentol + pyruvate = (3S,5R,10R,12S,14S,15R,16R)-3,5,10,14,15-pentahydroxy-12,16-dimethylicosan-2-one + L-alanine. In terms of biological role, involved in degradation of fumonisin B1. Catalyzes the deamination of aminopentol (HFB1) to 2-keto-HFB1. Pyruvate is the preferred cosubstrate, but it can also use several other alpha-keto acids as amino group acceptors. In Sphingopyxis macrogoltabida (Sphingomonas macrogoltabidus), this protein is Aminopentol aminotransferase (fumI).